The chain runs to 658 residues: Probable mitochondrial Rho GTPase gemA (658 aa).

Over 1-633 the chain is Cytoplasmic; the sequence is MKNNIKVILI…NGSNGSNNSN (633 aa). The Miro 1 domain maps to 2 to 175; the sequence is KNNIKVILIG…LYASQTSVFF (174 aa). Residues 11-18, 57-62, and 118-121 each bind GTP; these read GDEQVGKS, DTFDDG, and NKLD. EF-hand domains are found at residues 191-226 and 311-346; these read GCER…CGHE and MGNE…TPKI. Asp204, Asp206, Asp208, Ser210, Glu215, Asp324, Asp326, Asp328, and Asp335 together coordinate Ca(2+). The Miro 2 domain occupies 420 to 616; the sequence is RNIVNCYVFG…YHEMMETIVN (197 aa). GTP is bound by residues 429–436, 466–468, and 530–533; these read GAEAVGKT, LLK, and TKNN. The tract at residues 532 to 575 is disordered; sequence NNNNNNNNNNNNNNNNNNNNLNNNNNNINNNNNNNNNNTTTTNA. The chain crosses the membrane as a helical; Anchor for type IV membrane protein span at residues 634-656; sequence ILTYLVIAAGVAGVGLLLSKYLA. Residues 657 to 658 lie on the Mitochondrial intermembrane side of the membrane; it reads KK.

This sequence belongs to the mitochondrial Rho GTPase family.

Its subcellular location is the mitochondrion outer membrane. In terms of biological role, mitochondrial GTPase involved in mitochondrial trafficking. Probably involved in control of anterograde transport of mitochondria and their subcellular distribution. The chain is Probable mitochondrial Rho GTPase gemA (gemA) from Dictyostelium discoideum (Social amoeba).